The following is a 267-amino-acid chain: Phosphate import ATP-binding protein PstB 2 (267 aa).

One can recognise an ABC transporter domain in the interval 21-262 (LSTKDLHVYY…AKLQSTSDYV (242 aa)). 53–60 (GPSGCGKS) serves as a coordination point for ATP.

This sequence belongs to the ABC transporter superfamily. Phosphate importer (TC 3.A.1.7) family. As to quaternary structure, the complex is composed of two ATP-binding proteins (PstB), two transmembrane proteins (PstC and PstA) and a solute-binding protein (PstS).

The protein resides in the cell membrane. It catalyses the reaction phosphate(out) + ATP + H2O = ADP + 2 phosphate(in) + H(+). In terms of biological role, part of the ABC transporter complex PstSACB involved in phosphate import. Responsible for energy coupling to the transport system. The polypeptide is Phosphate import ATP-binding protein PstB 2 (Streptococcus mutans serotype c (strain ATCC 700610 / UA159)).